The primary structure comprises 409 residues: Killer cell lectin-like receptor subfamily G member 2 (409 aa).

Residues 1–120 (MEESWEAAPG…GAEPAPSAWA (120 aa)) form a disordered region. Residues 41–53 (PEGPESSPSPAGA) are compositionally biased toward low complexity. A compositionally biased stretch (pro residues) spans 72 to 81 (SPRPGSPRVP). Low complexity predominate over residues 104-120 (PRNGEAPGAEPAPSAWA). Ser158 is modified (phosphoserine). The segment at 193-216 (TESGCDAEGRASPAEGSAGSPGSP) is disordered. A compositionally biased stretch (low complexity) spans 202 to 216 (RASPAEGSAGSPGSP). A helical membrane pass occupies residues 263–283 (WALAFMAVLLAVSGVVIVVLA). Residues 300–405 (SEEHCYYFSA…CSTPRPWVCA (106 aa)) form the C-type lectin domain. 2 disulfide bridges follow: Cys321-Cys404 and Cys383-Cys396.

It is found in the membrane. The polypeptide is Killer cell lectin-like receptor subfamily G member 2 (KLRG2) (Homo sapiens (Human)).